We begin with the raw amino-acid sequence, 179 residues long: Ribosomal RNA small subunit methyltransferase G (179 aa).

S-adenosyl-L-methionine contacts are provided by residues Gly54, Phe59, 105-106 (IE), and Arg121.

It belongs to the methyltransferase superfamily. RNA methyltransferase RsmG family.

Its subcellular location is the cytoplasm. The catalysed reaction is guanosine(527) in 16S rRNA + S-adenosyl-L-methionine = N(7)-methylguanosine(527) in 16S rRNA + S-adenosyl-L-homocysteine. Specifically methylates the N7 position of guanine in position 527 of 16S rRNA. The chain is Ribosomal RNA small subunit methyltransferase G from Helicobacter bizzozeronii.